Consider the following 294-residue polypeptide: Cell division protein ZipA (294 aa).

A topological domain (periplasmic) is located at residue Met-1. Residues 2 to 22 (EIGLREWLILIGIIVIAGILF) traverse the membrane as a helical segment. At 23–294 (DGWRRMRGGK…FERRALTQKR (272 aa)) the chain is on the cytoplasmic side. A disordered region spans residues 47-107 (PDEEGSAEVL…GKRAAEMQPQ (61 aa)). A compositionally biased stretch (basic and acidic residues) spans 82–91 (AREREREQKP).

Belongs to the ZipA family. In terms of assembly, interacts with FtsZ via their C-terminal domains.

The protein localises to the cell inner membrane. Essential cell division protein that stabilizes the FtsZ protofilaments by cross-linking them and that serves as a cytoplasmic membrane anchor for the Z ring. Also required for the recruitment to the septal ring of downstream cell division proteins. The protein is Cell division protein ZipA of Pseudomonas putida (strain W619).